Here is a 175-residue protein sequence, read N- to C-terminus: Ribosome maturation factor RimM (175 aa).

Residues 93 to 167 enclose the PRC barrel domain; it reads DDEFYYSDLI…YIIITLPEVI (75 aa).

Belongs to the RimM family. As to quaternary structure, binds ribosomal protein uS19.

The protein localises to the cytoplasm. In terms of biological role, an accessory protein needed during the final step in the assembly of 30S ribosomal subunit, possibly for assembly of the head region. Essential for efficient processing of 16S rRNA. May be needed both before and after RbfA during the maturation of 16S rRNA. It has affinity for free ribosomal 30S subunits but not for 70S ribosomes. This is Ribosome maturation factor RimM from Ehrlichia chaffeensis (strain ATCC CRL-10679 / Arkansas).